A 449-amino-acid chain; its full sequence is Bifunctional protein GlmU (449 aa).

The tract at residues 1–231 (MVRNCLSIVL…FDNVIGINNC (231 aa)) is pyrophosphorylase. UDP-N-acetyl-alpha-D-glucosamine-binding positions include 10–13 (LAAG), lysine 24, glutamine 77, and 82–83 (GT). Aspartate 107 lines the Mg(2+) pocket. 4 residues coordinate UDP-N-acetyl-alpha-D-glucosamine: glycine 143, glutamate 157, asparagine 172, and asparagine 229. Asparagine 229 serves as a coordination point for Mg(2+). Residues 232 to 252 (FELFEADALWQKRKARDLMLS) form a linker region. The segment at 253–449 (GVTILKPESV…AHLSKNKRNK (197 aa)) is N-acetyltransferase. UDP-N-acetyl-alpha-D-glucosamine-binding residues include arginine 318 and lysine 336. The Proton acceptor role is filled by histidine 348. Positions 351 and 362 each coordinate UDP-N-acetyl-alpha-D-glucosamine. Acetyl-CoA-binding positions include alanine 365, 371–372 (NY), serine 390, serine 408, and arginine 425.

It in the N-terminal section; belongs to the N-acetylglucosamine-1-phosphate uridyltransferase family. This sequence in the C-terminal section; belongs to the transferase hexapeptide repeat family. Homotrimer. Mg(2+) serves as cofactor.

The protein localises to the cytoplasm. The catalysed reaction is alpha-D-glucosamine 1-phosphate + acetyl-CoA = N-acetyl-alpha-D-glucosamine 1-phosphate + CoA + H(+). The enzyme catalyses N-acetyl-alpha-D-glucosamine 1-phosphate + UTP + H(+) = UDP-N-acetyl-alpha-D-glucosamine + diphosphate. Its pathway is nucleotide-sugar biosynthesis; UDP-N-acetyl-alpha-D-glucosamine biosynthesis; N-acetyl-alpha-D-glucosamine 1-phosphate from alpha-D-glucosamine 6-phosphate (route II): step 2/2. The protein operates within nucleotide-sugar biosynthesis; UDP-N-acetyl-alpha-D-glucosamine biosynthesis; UDP-N-acetyl-alpha-D-glucosamine from N-acetyl-alpha-D-glucosamine 1-phosphate: step 1/1. It functions in the pathway bacterial outer membrane biogenesis; LPS lipid A biosynthesis. In terms of biological role, catalyzes the last two sequential reactions in the de novo biosynthetic pathway for UDP-N-acetylglucosamine (UDP-GlcNAc). The C-terminal domain catalyzes the transfer of acetyl group from acetyl coenzyme A to glucosamine-1-phosphate (GlcN-1-P) to produce N-acetylglucosamine-1-phosphate (GlcNAc-1-P), which is converted into UDP-GlcNAc by the transfer of uridine 5-monophosphate (from uridine 5-triphosphate), a reaction catalyzed by the N-terminal domain. The sequence is that of Bifunctional protein GlmU from Bartonella bacilliformis (strain ATCC 35685 / KC583 / Herrer 020/F12,63).